The sequence spans 1288 residues: Contactin-associated protein-like 3B (1288 aa).

Positions 1–25 (MASVAWAVLKVLLLLPTQTWSPVGA) are cleaved as a signal peptide. The disordered stretch occupies residues 23–61 (VGAGNPPDCDSPLASALPRSSFSSSSELSSSHGPGFSRL). Residues 26–1245 (GNPPDCDSPL…LVNADRRDSA (1220 aa)) are Extracellular-facing. Residues 31-177 (CDSPLASALP…IGMRIEVYGC (147 aa)) form the F5/8 type C domain. 6 cysteine pairs are disulfide-bonded: C31–C177, C332–C364, C513–C545, C551–C562, C556–C571, and C573–C583. Low complexity predominate over residues 33–59 (SPLASALPRSSFSSSSELSSSHGPGFS). Laminin G-like domains are found at residues 183-364 (VVYF…SFSC) and 370-545 (VPVT…IDSC). N359 carries N-linked (GlcNAc...) asparagine glycosylation. An EGF-like 1 domain is found at 547–584 (ITDRCLPSYCEHGGECSQSWDTFSCDCLGTGYTGETCH). The 208-residue stretch at 585 to 792 (SSLYEQSCEA…LLCRGDKSFW (208 aa)) folds into the Fibrinogen C-terminal domain. Residue N706 is glycosylated (N-linked (GlcNAc...) asparagine). Positions 793–958 (NSASFNTETS…TVTPGVEPGC (166 aa)) constitute a Laminin G-like 3 domain. Disulfide bonds link C931/C958, C962/C975, C969/C984, C986/C996, and C1167/C1203. Positions 959-997 (AGHCSTYGHLCRNGGRCREKRRGVTCDCAFSAYDGPFCS) constitute an EGF-like 2 domain. The region spanning 1016–1203 (EHYTLSENSS…RGHVAPMARC (188 aa)) is the Laminin G-like 4 domain. The tract at residues 1215-1236 (ELAPRLAGGAGRSGPVDEGEPL) is disordered. The chain crosses the membrane as a helical span at residues 1246-1266 (VIGGVIAVEIFILLCITAIAI). Residues 1267–1288 (RIYQQRKLRKENESKVSKKEEC) are Cytoplasmic-facing.

Belongs to the neurexin family.

Its subcellular location is the membrane. The sequence is that of Contactin-associated protein-like 3B (CNTNAP3B) from Homo sapiens (Human).